The following is a 1590-amino-acid chain: Pentafunctional AROM polypeptide (1590 aa).

The segment at 1–387 (MGSTTFENPT…YEPKASVVED (387 aa)) is 3-dehydroquinate synthase. NAD(+)-binding positions include 49–51 (DTN), 86–89 (ENSK), 117–119 (GGV), and Asp122. Arg133 is a binding site for 7-phospho-2-dehydro-3-deoxy-D-arabino-heptonate. 142-143 (TT) provides a ligand contact to NAD(+). 7-phospho-2-dehydro-3-deoxy-D-arabino-heptonate-binding residues include Asp149 and Lys155. Lys164 is a binding site for NAD(+). A 7-phospho-2-dehydro-3-deoxy-D-arabino-heptonate-binding site is contributed by Asn165. Residues 182 to 185 (FLET) and Asn193 contribute to the NAD(+) site. Zn(2+) is bound at residue Glu197. 7-phospho-2-dehydro-3-deoxy-D-arabino-heptonate-binding positions include 197 to 200 (EVVK) and Lys253. The active-site Proton acceptor; for 3-dehydroquinate synthase activity is the Glu263. Residues 267–271 (RNILN) and His274 each bind 7-phospho-2-dehydro-3-deoxy-D-arabino-heptonate. His274 contributes to the Zn(2+) binding site. His278 acts as the Proton acceptor; for 3-dehydroquinate synthase activity in catalysis. 7-phospho-2-dehydro-3-deoxy-D-arabino-heptonate contacts are provided by His290 and Lys359. His290 contacts Zn(2+). The interval 400 to 841 (VRPSVPETLN…WDILSKSFQV (442 aa)) is EPSP synthase. Cys823 (for EPSP synthase activity) is an active-site residue. Residues 863 to 1055 (DKSIFIIGMR…RNKPQSFFVS (193 aa)) form a shikimate kinase region. An ATP-binding site is contributed by 870–877 (GMRGAGKT). Positions 1056 to 1276 (LTMPDISGAA…AAPGQLSAAE (221 aa)) are 3-dehydroquinase. Residue His1179 is the Proton acceptor; for 3-dehydroquinate dehydratase activity of the active site. Residue Lys1207 is the Schiff-base intermediate with substrate; for 3-dehydroquinate dehydratase activity of the active site. The shikimate dehydrogenase stretch occupies residues 1289–1590 (PKSFYLFGTP…KMDKHPTFVC (302 aa)).

In the N-terminal section; belongs to the sugar phosphate cyclases superfamily. Dehydroquinate synthase family. This sequence in the 2nd section; belongs to the EPSP synthase family. It in the 3rd section; belongs to the shikimate kinase family. The protein in the 4th section; belongs to the type-I 3-dehydroquinase family. In the C-terminal section; belongs to the shikimate dehydrogenase family. As to quaternary structure, homodimer. Requires Zn(2+) as cofactor.

The protein resides in the cytoplasm. The enzyme catalyses 7-phospho-2-dehydro-3-deoxy-D-arabino-heptonate = 3-dehydroquinate + phosphate. It carries out the reaction 3-dehydroquinate = 3-dehydroshikimate + H2O. The catalysed reaction is shikimate + NADP(+) = 3-dehydroshikimate + NADPH + H(+). It catalyses the reaction shikimate + ATP = 3-phosphoshikimate + ADP + H(+). The enzyme catalyses 3-phosphoshikimate + phosphoenolpyruvate = 5-O-(1-carboxyvinyl)-3-phosphoshikimate + phosphate. It functions in the pathway metabolic intermediate biosynthesis; chorismate biosynthesis; chorismate from D-erythrose 4-phosphate and phosphoenolpyruvate: step 2/7. Its pathway is metabolic intermediate biosynthesis; chorismate biosynthesis; chorismate from D-erythrose 4-phosphate and phosphoenolpyruvate: step 3/7. The protein operates within metabolic intermediate biosynthesis; chorismate biosynthesis; chorismate from D-erythrose 4-phosphate and phosphoenolpyruvate: step 4/7. It participates in metabolic intermediate biosynthesis; chorismate biosynthesis; chorismate from D-erythrose 4-phosphate and phosphoenolpyruvate: step 5/7. It functions in the pathway metabolic intermediate biosynthesis; chorismate biosynthesis; chorismate from D-erythrose 4-phosphate and phosphoenolpyruvate: step 6/7. Functionally, the AROM polypeptide catalyzes 5 consecutive enzymatic reactions in prechorismate polyaromatic amino acid biosynthesis. This chain is Pentafunctional AROM polypeptide, found in Sclerotinia sclerotiorum (White mold).